The primary structure comprises 394 residues: Argininosuccinate synthase (394 aa).

8–16 lines the ATP pocket; it reads AYSGGLDTS. Residues Tyr86 and Ser91 each coordinate L-citrulline. Gly116 lines the ATP pocket. 3 residues coordinate L-aspartate: Thr118, Asn122, and Asp123. Position 122 (Asn122) interacts with L-citrulline. L-citrulline is bound by residues Arg126, Ser172, Ser181, Glu257, and Tyr269.

The protein belongs to the argininosuccinate synthase family. Type 1 subfamily. Homotetramer.

It is found in the cytoplasm. It catalyses the reaction L-citrulline + L-aspartate + ATP = 2-(N(omega)-L-arginino)succinate + AMP + diphosphate + H(+). Its pathway is amino-acid biosynthesis; L-arginine biosynthesis; L-arginine from L-ornithine and carbamoyl phosphate: step 2/3. This chain is Argininosuccinate synthase, found in Methanosarcina mazei (strain ATCC BAA-159 / DSM 3647 / Goe1 / Go1 / JCM 11833 / OCM 88) (Methanosarcina frisia).